Consider the following 490-residue polypeptide: Probable cytochrome P450 518B1 (490 aa).

Residues 2–22 (LTNIIILIILYLFYDFCYKNF) form a helical membrane-spanning segment. Heme is bound at residue cysteine 437.

It belongs to the cytochrome P450 family. Heme is required as a cofactor.

It localises to the membrane. This is Probable cytochrome P450 518B1 (cyp518B1) from Dictyostelium discoideum (Social amoeba).